We begin with the raw amino-acid sequence, 309 residues long: Pantothenate kinase (309 aa).

Position 92–99 (92–99 (GSVAVGKT)) interacts with ATP.

The protein belongs to the prokaryotic pantothenate kinase family.

It is found in the cytoplasm. It catalyses the reaction (R)-pantothenate + ATP = (R)-4'-phosphopantothenate + ADP + H(+). Its pathway is cofactor biosynthesis; coenzyme A biosynthesis; CoA from (R)-pantothenate: step 1/5. In Lactiplantibacillus plantarum (strain ATCC BAA-793 / NCIMB 8826 / WCFS1) (Lactobacillus plantarum), this protein is Pantothenate kinase (coaA).